A 483-amino-acid chain; its full sequence is GDP-fucose protein O-fucosyltransferase 4 (483 aa).

Position 1 (methionine 1) is a topological domain, cytoplasmic. Residues 2–21 (ALCLWLFLVLPICCWCQGAV) form a helical; Signal-anchor for type II membrane protein membrane-spanning segment. At 22–483 (DLGDSGVFQP…RARGLSNDSR (462 aa)) the chain is on the lumenal side. N-linked (GlcNAc...) asparagine glycans are attached at residues asparagine 151 and asparagine 303. The cysteines at positions 374 and 377 are disulfide-linked. Residues 387 to 425 (RKAHRKNPKQNQPPQPKMANSSHMGCPLPSPGYGPVENV) are disordered. Residues asparagine 406, asparagine 428, asparagine 456, and asparagine 480 are each glycosylated (N-linked (GlcNAc...) asparagine).

The protein belongs to the glycosyltransferase 10 family.

It is found in the endoplasmic reticulum membrane. It carries out the reaction L-threonyl-[protein] + GDP-beta-L-fucose = 3-O-(alpha-L-fucosyl)-L-threonyl-[protein] + GDP + H(+). The enzyme catalyses L-seryl-[protein] + GDP-beta-L-fucose = 3-O-(alpha-L-fucosyl)-L-seryl-[protein] + GDP + H(+). Its pathway is protein modification; protein glycosylation. Protein O-fucosyltransferase that specifically catalyzes O-fucosylation of serine or threonine residues in EMI domains of target proteins. Attaches fucose through an O-glycosidic linkage. O-fucosylation of EMI domain-containing proteins may be required for facilitating protein folding and secretion. This chain is GDP-fucose protein O-fucosyltransferase 4 (fut11), found in Danio rerio (Zebrafish).